A 996-amino-acid polypeptide reads, in one-letter code: Alanine--tRNA ligase, chloroplastic/mitochondrial (996 aa).

Zn(2+) contacts are provided by H677, H681, C779, and H783.

It belongs to the class-II aminoacyl-tRNA synthetase family. As to quaternary structure, monomer. It depends on Zn(2+) as a cofactor.

The protein localises to the plastid. The protein resides in the chloroplast. Its subcellular location is the mitochondrion. The catalysed reaction is tRNA(Ala) + L-alanine + ATP = L-alanyl-tRNA(Ala) + AMP + diphosphate. Functionally, catalyzes the attachment of alanine to tRNA(Ala) in a two-step reaction: alanine is first activated by ATP to form Ala-AMP and then transferred to the acceptor end of tRNA(Ala). Also edits incorrectly charged tRNA(Ala) via its editing domain. The chain is Alanine--tRNA ligase, chloroplastic/mitochondrial from Oryza sativa subsp. japonica (Rice).